Consider the following 25-residue polypeptide: uncharacterized protein (25 aa).

This is an uncharacterized protein from Ornithodoros (relapsing fever ticks).